Here is a 91-residue protein sequence, read N- to C-terminus: Small membrane A-kinase anchor protein (91 aa).

Residue G2 is the site of N-myristoyl glycine attachment.

Belongs to the small membrane AKAP family. In terms of processing, may be palmitoylated at Cys-3.

The protein resides in the cell membrane. Binds to type I regulatory subunits of protein kinase A and may anchor/target them to the plasma membrane. The sequence is that of Small membrane A-kinase anchor protein from Xenopus laevis (African clawed frog).